Here is a 385-residue protein sequence, read N- to C-terminus: Histidinol-phosphate aminotransferase (385 aa).

N6-(pyridoxal phosphate)lysine is present on lysine 235.

The protein belongs to the class-II pyridoxal-phosphate-dependent aminotransferase family. Histidinol-phosphate aminotransferase subfamily. In terms of assembly, homodimer. The cofactor is pyridoxal 5'-phosphate.

The enzyme catalyses L-histidinol phosphate + 2-oxoglutarate = 3-(imidazol-4-yl)-2-oxopropyl phosphate + L-glutamate. It participates in amino-acid biosynthesis; L-histidine biosynthesis; L-histidine from 5-phospho-alpha-D-ribose 1-diphosphate: step 7/9. The chain is Histidinol-phosphate aminotransferase from Nocardia farcinica (strain IFM 10152).